The chain runs to 1943 residues: Cadherin-86C (1943 aa).

Residues 1 to 102 (MASTSSSQPE…QNQQMQHHWP (102 aa)) form a disordered region. Residues 1 to 934 (MASTSSSQPE…TDTQYKAENK (934 aa)) lie on the Extracellular side of the membrane. Asn12 carries an N-linked (GlcNAc...) asparagine glycan. The segment covering 50-89 (PHHHHHHHHQHHHHHRLKQHHRHHHHHHRLQHHHHHHQQQ) has biased composition (basic residues). Positions 90 to 100 (HNHQNQQMQHH) are enriched in low complexity. Cadherin domains follow at residues 238–366 (CSIT…PPVF), 367–483 (TSAP…PPYF), 484–600 (ENDH…APVF), 601–708 (EQPA…TPIF), and 709–832 (DKDL…SVKF). 7 N-linked (GlcNAc...) asparagine glycosylation sites follow: Asn244, Asn419, Asn531, Asn579, Asn585, Asn612, and Asn645. Asn912 is a glycosylation site (N-linked (GlcNAc...) asparagine). Residues 935–955 (VLFWLLILLATLVALTILILL) traverse the membrane as a helical segment. Residues 956 to 1943 (LCCICSWCPL…NSGGESPQYS (988 aa)) are Cytoplasmic-facing. 5 disordered regions span residues 1038 to 1058 (DVGRGQDIGEGDRRHIQSAEE), 1390 to 1442 (KPSR…RKRI), 1458 to 1516 (EEEE…SHNR), 1546 to 1695 (YKHS…ERNV), and 1707 to 1895 (KSSV…DDHD). Residues 1047–1058 (EGDRRHIQSAEE) are compositionally biased toward basic and acidic residues. Residues 1426–1442 (IKRRRTKKRPRQPRKRI) show a composition bias toward basic residues. 2 stretches are compositionally biased toward basic and acidic residues: residues 1486 to 1497 (QLSDESRKDQSR) and 1507 to 1516 (HRSESDSHNR). The segment covering 1552-1568 (DFDEDDTEYSIDSDGDE) has biased composition (acidic residues). A compositionally biased stretch (basic and acidic residues) spans 1580 to 1602 (QENERYRRQERTYAEPENPVDRK). Residues 1633–1667 (KQTSSEPPHNRVSISKYESTVTENGRKLMSTSTEI) are compositionally biased toward polar residues. The span at 1709–1724 (SVSGRTSTESSKSQPS) shows a compositional bias: low complexity. Basic and acidic residues-rich tracts occupy residues 1754-1764 (TGGRYKPEPAP), 1774-1793 (LLKEDRALNKQHKPKIETDT), 1800-1810 (HSEHRFERENA), and 1837-1863 (KESKSGRESKTSKEAKPKPSPIRENEV). The segment covering 1879–1889 (HPTQKQLNAST) has biased composition (polar residues).

As to expression, as cell intercalation proceeds, a row of stigmatophore cells surrounding the spiracular chamber show expression of Cad86C. Expression is regulated by the Abd-B cascade, requiring sal. Expressed in a broad region of the morphogenetic furrow and in clusters of cells posterior to the morphogenetic furrow. Weakly expressed in the epithelium of wing imaginal disks. In eye imaginal disk cells within the morphogenetic furrow, expression is localized to the apical region.

Its subcellular location is the cell membrane. Cadherins are calcium-dependent cell adhesion proteins. They preferentially interact with themselves in a homophilic manner in connecting cells. The polypeptide is Cadherin-86C (Cad86C) (Drosophila melanogaster (Fruit fly)).